A 511-amino-acid chain; its full sequence is Glucans biosynthesis protein G (511 aa).

An N-terminal signal peptide occupies residues M1 to A22.

The protein belongs to the OpgD/OpgG family.

The protein resides in the periplasm. It functions in the pathway glycan metabolism; osmoregulated periplasmic glucan (OPG) biosynthesis. Functionally, involved in the biosynthesis of osmoregulated periplasmic glucans (OPGs). This Escherichia coli O8 (strain IAI1) protein is Glucans biosynthesis protein G.